A 261-amino-acid chain; its full sequence is UPF0246 protein AZOSEA34360 (261 aa).

The protein belongs to the UPF0246 family.

This Aromatoleum aromaticum (strain DSM 19018 / LMG 30748 / EbN1) (Azoarcus sp. (strain EbN1)) protein is UPF0246 protein AZOSEA34360.